Reading from the N-terminus, the 946-residue chain is Protein translocase subunit SecA (946 aa).

Residues Q87, 105-109 (GEGKT), and D524 contribute to the ATP site. Positions 904–933 (PAQTTDKADRDPNKPETWGKVGRNEDCPCG) are disordered. Residues C930, C932, C941, and H942 each coordinate Zn(2+).

It belongs to the SecA family. Monomer and homodimer. Part of the essential Sec protein translocation apparatus which comprises SecA, SecYEG and auxiliary proteins SecDF-YajC and YidC. The cofactor is Zn(2+).

It localises to the cell inner membrane. Its subcellular location is the cytoplasm. It carries out the reaction ATP + H2O + cellular proteinSide 1 = ADP + phosphate + cellular proteinSide 2.. In terms of biological role, part of the Sec protein translocase complex. Interacts with the SecYEG preprotein conducting channel. Has a central role in coupling the hydrolysis of ATP to the transfer of proteins into and across the cell membrane, serving both as a receptor for the preprotein-SecB complex and as an ATP-driven molecular motor driving the stepwise translocation of polypeptide chains across the membrane. The protein is Protein translocase subunit SecA of Rhodopseudomonas palustris (strain TIE-1).